A 261-amino-acid polypeptide reads, in one-letter code: UPF0246 protein Reut_A1014 (261 aa).

The protein belongs to the UPF0246 family.

The protein is UPF0246 protein Reut_A1014 of Cupriavidus pinatubonensis (strain JMP 134 / LMG 1197) (Cupriavidus necator (strain JMP 134)).